Reading from the N-terminus, the 201-residue chain is Large ribosomal subunit protein eL15B (201 aa).

The interval 161-182 (SRGLTSIGKKSRGIGKGHRYNN) is disordered. Residues 169-179 (KKSRGIGKGHR) show a composition bias toward basic residues. Position 183 is a phosphoserine (Ser183).

It belongs to the eukaryotic ribosomal protein eL15 family. As to quaternary structure, component of the large ribosomal subunit (LSU). Mature yeast ribosomes consist of a small (40S) and a large (60S) subunit. The 40S small subunit contains 1 molecule of ribosomal RNA (18S rRNA) and at least 33 different proteins. The large 60S subunit contains 3 rRNA molecules (25S, 5.8S and 5S rRNA) and at least 46 different proteins.

The protein resides in the cytoplasm. It is found in the nucleus. The protein localises to the nucleolus. Functionally, component of the ribosome, a large ribonucleoprotein complex responsible for the synthesis of proteins in the cell. The small ribosomal subunit (SSU) binds messenger RNAs (mRNAs) and translates the encoded message by selecting cognate aminoacyl-transfer RNA (tRNA) molecules. The large subunit (LSU) contains the ribosomal catalytic site termed the peptidyl transferase center (PTC), which catalyzes the formation of peptide bonds, thereby polymerizing the amino acids delivered by tRNAs into a polypeptide chain. The nascent polypeptides leave the ribosome through a tunnel in the LSU and interact with protein factors that function in enzymatic processing, targeting, and the membrane insertion of nascent chains at the exit of the ribosomal tunnel. In Schizosaccharomyces pombe (strain 972 / ATCC 24843) (Fission yeast), this protein is Large ribosomal subunit protein eL15B (rpl1502).